The following is a 245-amino-acid chain: Uridylate kinase (245 aa).

An ATP-binding site is contributed by Lys20–Gly23. Gly62 is a UMP binding site. Residues Gly63 and Arg67 each contribute to the ATP site. UMP-binding positions include Asp81 and Ile142 to Thr149. ATP contacts are provided by Thr169, Gln170, Tyr175, and Asp178.

Belongs to the UMP kinase family. In terms of assembly, homohexamer.

It localises to the cytoplasm. It carries out the reaction UMP + ATP = UDP + ADP. It participates in pyrimidine metabolism; CTP biosynthesis via de novo pathway; UDP from UMP (UMPK route): step 1/1. Its activity is regulated as follows. Inhibited by UTP. In terms of biological role, catalyzes the reversible phosphorylation of UMP to UDP. In Anaplasma marginale (strain St. Maries), this protein is Uridylate kinase.